Reading from the N-terminus, the 194-residue chain is Thymidylate kinase (194 aa).

Residue 7-14 participates in ATP binding; it reads GVDCVGKS.

The protein belongs to the thymidylate kinase family.

The catalysed reaction is dTMP + ATP = dTDP + ADP. In terms of biological role, phosphorylation of dTMP to form dTDP in both de novo and salvage pathways of dTTP synthesis. The chain is Thymidylate kinase from Campylobacter lari (strain RM2100 / D67 / ATCC BAA-1060).